Consider the following 415-residue polypeptide: Serine hydroxymethyltransferase (415 aa).

(6S)-5,6,7,8-tetrahydrofolate-binding positions include Leu-121 and 125-127 (GHL). At Lys-229 the chain carries N6-(pyridoxal phosphate)lysine.

Belongs to the SHMT family. As to quaternary structure, homodimer. Requires pyridoxal 5'-phosphate as cofactor.

The protein localises to the cytoplasm. It catalyses the reaction (6R)-5,10-methylene-5,6,7,8-tetrahydrofolate + glycine + H2O = (6S)-5,6,7,8-tetrahydrofolate + L-serine. The protein operates within one-carbon metabolism; tetrahydrofolate interconversion. It functions in the pathway amino-acid biosynthesis; glycine biosynthesis; glycine from L-serine: step 1/1. Its function is as follows. Catalyzes the reversible interconversion of serine and glycine with tetrahydrofolate (THF) serving as the one-carbon carrier. This reaction serves as the major source of one-carbon groups required for the biosynthesis of purines, thymidylate, methionine, and other important biomolecules. Also exhibits THF-independent aldolase activity toward beta-hydroxyamino acids, producing glycine and aldehydes, via a retro-aldol mechanism. This chain is Serine hydroxymethyltransferase, found in Bordetella petrii (strain ATCC BAA-461 / DSM 12804 / CCUG 43448).